The sequence spans 146 residues: Small ribosomal subunit protein bS16 (146 aa).

Residues 84–102 are compositionally biased toward basic and acidic residues; that stretch reads SHLEAQKAAVERLGRRKDY. A disordered region spans residues 84–146; that stretch reads SHLEAQKAAV…DAPAAEATTE (63 aa). A compositionally biased stretch (low complexity) spans 110-119; that stretch reads APKAAPVAEA. Residues 120–130 are compositionally biased toward acidic residues; it reads PAEEAPAEEPA. A compositionally biased stretch (low complexity) spans 131 to 146; the sequence is AEASTDDAPAAEATTE.

The protein belongs to the bacterial ribosomal protein bS16 family.

The sequence is that of Small ribosomal subunit protein bS16 from Rhodopirellula baltica (strain DSM 10527 / NCIMB 13988 / SH1).